The sequence spans 403 residues: Leu/Ile/Val-binding protein homolog 8 (403 aa).

The signal sequence occupies residues 1 to 26; it reads MRLSRLLIGASLGVALSSTVFTAALA.

It belongs to the leucine-binding protein family.

Component of an amino-acid transport system. The protein is Leu/Ile/Val-binding protein homolog 8 of Brucella abortus (strain 2308).